Consider the following 479-residue polypeptide: Aryl-phospho-beta-D-glucosidase BglA (479 aa).

Glu176 serves as the catalytic Proton donor. Glu377 serves as the catalytic Nucleophile.

Belongs to the glycosyl hydrolase 1 family.

The enzyme catalyses 6-phospho-beta-D-glucosyl-(1-&gt;4)-D-glucose + H2O = D-glucose 6-phosphate + D-glucose. Catalyzes the hydrolysis of aryl-phospho-beta-D-glucosides such as 4-methylumbelliferyl-phospho-beta-D-glucopyranoside (MUG-P), phosphoarbutin and phosphosalicin. Plays a major role in the utilization of arbutin or salicin as the sole carbon source. BglA and BglH are the major proteins contributing to hydrolysis of MUG-P by extracts of late-exponential-phase or stationary-phase B.subtilis cells. This Bacillus subtilis (strain 168) protein is Aryl-phospho-beta-D-glucosidase BglA (bglA).